The primary structure comprises 156 residues: ATP synthase subunit b (156 aa).

The helical transmembrane segment at 5–27 (ITLIGQMITFAIFIGFTMKFVWP) threads the bilayer.

Belongs to the ATPase B chain family. In terms of assembly, F-type ATPases have 2 components, F(1) - the catalytic core - and F(0) - the membrane proton channel. F(1) has five subunits: alpha(3), beta(3), gamma(1), delta(1), epsilon(1). F(0) has three main subunits: a(1), b(2) and c(10-14). The alpha and beta chains form an alternating ring which encloses part of the gamma chain. F(1) is attached to F(0) by a central stalk formed by the gamma and epsilon chains, while a peripheral stalk is formed by the delta and b chains.

Its subcellular location is the cell inner membrane. F(1)F(0) ATP synthase produces ATP from ADP in the presence of a proton or sodium gradient. F-type ATPases consist of two structural domains, F(1) containing the extramembraneous catalytic core and F(0) containing the membrane proton channel, linked together by a central stalk and a peripheral stalk. During catalysis, ATP synthesis in the catalytic domain of F(1) is coupled via a rotary mechanism of the central stalk subunits to proton translocation. Its function is as follows. Component of the F(0) channel, it forms part of the peripheral stalk, linking F(1) to F(0). The polypeptide is ATP synthase subunit b (Francisella tularensis subsp. holarctica (strain OSU18)).